A 413-amino-acid polypeptide reads, in one-letter code: Peptidase T (413 aa).

Residue His-84 coordinates Zn(2+). The active site involves Asp-86. Asp-146 contacts Zn(2+). The Proton acceptor role is filled by Glu-180. Residues Glu-181, Asp-203, and His-385 each coordinate Zn(2+).

Belongs to the peptidase M20B family. Zn(2+) serves as cofactor.

It localises to the cytoplasm. It carries out the reaction Release of the N-terminal residue from a tripeptide.. Functionally, cleaves the N-terminal amino acid of tripeptides. The sequence is that of Peptidase T from Limosilactobacillus fermentum (strain NBRC 3956 / LMG 18251) (Lactobacillus fermentum).